Reading from the N-terminus, the 302-residue chain is Citrate lyase subunit beta (302 aa).

Arg-69 and Glu-132 together coordinate substrate. Mg(2+) contacts are provided by Glu-132 and Asp-159.

Belongs to the HpcH/HpaI aldolase family. Citrate lyase beta subunit subfamily. Oligomer with a subunit composition of (alpha,beta,gamma)6. The cofactor is Mg(2+).

It localises to the cytoplasm. It carries out the reaction citrate = oxaloacetate + acetate. It catalyses the reaction (3S)-citryl-CoA = oxaloacetate + acetyl-CoA. Represents a citryl-ACP lyase. The chain is Citrate lyase subunit beta (citE) from Leuconostoc mesenteroides subsp. cremoris.